Reading from the N-terminus, the 85-residue chain is Putative membrane protein insertion efficiency factor (85 aa).

This sequence belongs to the UPF0161 family.

The protein resides in the cell inner membrane. Its function is as follows. Could be involved in insertion of integral membrane proteins into the membrane. The chain is Putative membrane protein insertion efficiency factor from Shewanella woodyi (strain ATCC 51908 / MS32).